The following is a 219-amino-acid chain: Flagellin A (219 aa).

The propeptide occupies 1-12 (MKVKEFMNNKKG). N-linked (GlcNAc...) asparagine glycans are attached at residues N38 and N175.

This sequence belongs to the archaeal flagellin family. In terms of processing, N-linked glycans consist of the 779 Da trisaccharide beta-ManNAc(Thr)-(1-4)-beta-GlcNAc3NAcA-(1-3)-beta-GlcNAc.

It localises to the archaeal flagellum. Flagellin is the subunit protein which polymerizes to form the filaments of archaeal flagella. This chain is Flagellin A (flaA), found in Methanococcus voltae.